The primary structure comprises 1434 residues: Gag-Pol polyprotein (1434 aa).

The N-myristoyl glycine; by host moiety is linked to residue G2. The interaction with Gp41 stretch occupies residues 7-31 (VLSGGELDKWEKIRLRPGGKKKYQL). The interval 8-43 (LSGGELDKWEKIRLRPGGKKKYQLKHIVWASRELER) is interaction with host CALM1. Positions 12 to 19 (ELDKWEKI) are interaction with host AP3D1. Residues 14–33 (DKWEKIRLRPGGKKKYQLKH) are interaction with membrane phosphatidylinositol 4,5-bisphosphate and RNA. The short motif at 16–22 (WEKIRLR) is the Nuclear export signal element. The Nuclear localization signal signature appears at 26 to 32 (KKKYQLK). The segment at 73–77 (EEIRS) is interaction with membrane phosphatidylinositol 4,5-bisphosphate. Positions 106–128 (EEQNKSKKKAQQTAADTGNSSQV) are disordered. A compositionally biased stretch (polar residues) spans 116–128 (QQTAADTGNSSQV). At Y132 the chain carries Phosphotyrosine; by host. Residues 189–227 (NTVGGHQAAMQMLKETINEEAAEWDRLHPVHAGPIAPGQ) form an interaction with human PPIA/CYPA and NUP153 region. Residues 277–363 (YSPTSILDIR…GGPGHKARVL (87 aa)) form a dimerization/Multimerization of capsid protein p24 region. 2 CCHC-type zinc fingers span residues 389–406 (VKCFNCGKEGHIAKNCRA) and 410–427 (KGCWKCGREGHQMKDCTE). Residues 443-480 (KAREFSSEQTRANSPTSRELRVWGRDNNSPSEAGADRQ) are disordered. Residues 449–459 (SEQTRANSPTS) show a composition bias toward polar residues. Positions 488–492 (PQITL) are dimerization of protease. Residues 507–576 (KEALLDTGAD…TPVNIIGRNL (70 aa)) enclose the Peptidase A2 domain. D512 (for protease activity; shared with dimeric partner) is an active-site residue. Dimerization of protease regions lie at residues 536–542 (GIGGFIK) and 575–587 (NLLTQLGCTLNFP). A Reverse transcriptase domain is found at 630–820 (EGKISKVGPE…PPFLWMGYEL (191 aa)). 3 residues coordinate Mg(2+): D696, D771, and D772. Positions 813-821 (FLWMGYELH) are RT 'primer grip'. A Tryptophan repeat motif motif is present at residues 984-1000 (WEAWWTEYWQATWIPEW). The region spanning 1020-1143 (IVGAETFYVD…VDKLVSAGIR (124 aa)) is the RNase H type-1 domain. Residues D1029, E1064, D1084, and D1135 each contribute to the Mg(2+) site. The Integrase-type zinc finger occupies 1149 to 1190 (DGIDKAQEEHEKYHSNWRAMASDFNLPPVVAKEIVASCDKCQ). Zn(2+) is bound by residues H1158, H1162, C1186, and C1189. The Integrase catalytic domain occupies 1200–1350 (VDCSPGIWQL…SAGERIVDII (151 aa)). Residues D1210, D1262, and E1298 each coordinate Mg(2+). The segment at residues 1369–1416 (FRVYYRDSREPLWKGPAKLLWKGEGAVVIQDNSDIKVVPRRKAKIIRD) is a DNA-binding region (integrase-type).

Homotrimer; further assembles as hexamers of trimers. Interacts with gp41 (via C-terminus). Interacts with host CALM1; this interaction induces a conformational change in the Matrix protein, triggering exposure of the myristate group. Interacts with host AP3D1; this interaction allows the polyprotein trafficking to multivesicular bodies during virus assembly. Part of the pre-integration complex (PIC) which is composed of viral genome, matrix protein, Vpr and integrase. As to quaternary structure, homodimer; the homodimer further multimerizes as homohexamers or homopentamers. Interacts with human PPIA/CYPA; This interaction stabilizes the capsid. Interacts with human NUP153. Interacts with host PDZD8; this interaction stabilizes the capsid. Interacts with monkey TRIM5; this interaction destabilizes the capsid. In terms of assembly, homodimer, whose active site consists of two apposed aspartic acid residues. Heterodimer of p66 RT and p51 RT (RT p66/p51). Heterodimerization of RT is essential for DNA polymerase activity. The overall folding of the subdomains is similar in p66 RT and p51 RT but the spatial arrangements of the subdomains are dramatically different. As to quaternary structure, homotetramer; may further associate as a homohexadecamer. Part of the pre-integration complex (PIC) which is composed of viral genome, matrix protein, Vpr and integrase. Interacts with human SMARCB1/INI1 and human PSIP1/LEDGF isoform 1. Interacts with human KPNA3; this interaction might play a role in nuclear import of the pre-integration complex. Interacts with human NUP153; this interaction might play a role in nuclear import of the pre-integration complex. The cofactor is Mg(2+). Specific enzymatic cleavages by the viral protease yield mature proteins. The protease is released by autocatalytic cleavage. The polyprotein is cleaved during and after budding, this process is termed maturation. Proteolytic cleavage of p66 RT removes the RNase H domain to yield the p51 RT subunit. Nucleocapsid protein p7 might be further cleaved after virus entry. Post-translationally, tyrosine phosphorylated presumably in the virion by a host kinase. Phosphorylation is apparently not a major regulator of membrane association. In terms of processing, phosphorylated possibly by host MAPK1; this phosphorylation is necessary for Pin1-mediated virion uncoating. Methylated by host PRMT6, impairing its function by reducing RNA annealing and the initiation of reverse transcription.

Its subcellular location is the host cell membrane. The protein resides in the host endosome. It is found in the host multivesicular body. The protein localises to the virion membrane. It localises to the host nucleus. Its subcellular location is the host cytoplasm. The protein resides in the virion. The catalysed reaction is Specific for a P1 residue that is hydrophobic, and P1' variable, but often Pro.. It catalyses the reaction Endohydrolysis of RNA in RNA/DNA hybrids. Three different cleavage modes: 1. sequence-specific internal cleavage of RNA. Human immunodeficiency virus type 1 and Moloney murine leukemia virus enzymes prefer to cleave the RNA strand one nucleotide away from the RNA-DNA junction. 2. RNA 5'-end directed cleavage 13-19 nucleotides from the RNA end. 3. DNA 3'-end directed cleavage 15-20 nucleotides away from the primer terminus.. It carries out the reaction 3'-end directed exonucleolytic cleavage of viral RNA-DNA hybrid.. The enzyme catalyses DNA(n) + a 2'-deoxyribonucleoside 5'-triphosphate = DNA(n+1) + diphosphate. Its activity is regulated as follows. Protease: The viral protease is inhibited by many synthetic protease inhibitors (PIs), such as amprenavir, atazanavir, indinavir, loprinavir, nelfinavir, ritonavir and saquinavir. Use of protease inhibitors in tritherapy regimens permit more ambitious therapeutic strategies. Reverse transcriptase/ribonuclease H: RT can be inhibited either by nucleoside RT inhibitors (NRTIs) or by non nucleoside RT inhibitors (NNRTIs). NRTIs act as chain terminators, whereas NNRTIs inhibit DNA polymerization by binding a small hydrophobic pocket near the RT active site and inducing an allosteric change in this region. Classical NRTIs are abacavir, adefovir (PMEA), didanosine (ddI), lamivudine (3TC), stavudine (d4T), tenofovir (PMPA), zalcitabine (ddC), and zidovudine (AZT). Classical NNRTIs are atevirdine (BHAP U-87201E), delavirdine, efavirenz (DMP-266), emivirine (I-EBU), and nevirapine (BI-RG-587). The tritherapies used as a basic effective treatment of AIDS associate two NRTIs and one NNRTI. Its function is as follows. Mediates, with Gag polyprotein, the essential events in virion assembly, including binding the plasma membrane, making the protein-protein interactions necessary to create spherical particles, recruiting the viral Env proteins, and packaging the genomic RNA via direct interactions with the RNA packaging sequence (Psi). Gag-Pol polyprotein may regulate its own translation, by the binding genomic RNA in the 5'-UTR. At low concentration, the polyprotein would promote translation, whereas at high concentration, the polyprotein would encapsidate genomic RNA and then shut off translation. Targets the polyprotein to the plasma membrane via a multipartite membrane-binding signal, that includes its myristoylated N-terminus. Matrix protein is part of the pre-integration complex. Implicated in the release from host cell mediated by Vpu. Binds to RNA. In terms of biological role, forms the conical core that encapsulates the genomic RNA-nucleocapsid complex in the virion. Most core are conical, with only 7% tubular. The core is constituted by capsid protein hexamer subunits. The core is disassembled soon after virion entry. Host restriction factors such as TRIM5-alpha or TRIMCyp bind retroviral capsids and cause premature capsid disassembly, leading to blocks in reverse transcription. Capsid restriction by TRIM5 is one of the factors which restricts HIV-1 to the human species. Host PIN1 apparently facilitates the virion uncoating. On the other hand, interactions with PDZD8 or CYPA stabilize the capsid. Functionally, encapsulates and protects viral dimeric unspliced genomic RNA (gRNA). Binds these RNAs through its zinc fingers. Acts as a nucleic acid chaperone which is involved in rearangement of nucleic acid secondary structure during gRNA retrotranscription. Also facilitates template switch leading to recombination. As part of the polyprotein, participates in gRNA dimerization, packaging, tRNA incorporation and virion assembly. Its function is as follows. Aspartyl protease that mediates proteolytic cleavages of Gag and Gag-Pol polyproteins during or shortly after the release of the virion from the plasma membrane. Cleavages take place as an ordered, step-wise cascade to yield mature proteins. This process is called maturation. Displays maximal activity during the budding process just prior to particle release from the cell. Also cleaves Nef and Vif, probably concomitantly with viral structural proteins on maturation of virus particles. Hydrolyzes host EIF4GI and PABP1 in order to shut off the capped cellular mRNA translation. The resulting inhibition of cellular protein synthesis serves to ensure maximal viral gene expression and to evade host immune response. Also mediates cleavage of host YTHDF3. Mediates cleavage of host CARD8, thereby activating the CARD8 inflammasome, leading to the clearance of latent HIV-1 in patient CD4(+) T-cells after viral reactivation; in contrast, HIV-1 can evade CARD8-sensing when its protease remains inactive in infected cells prior to viral budding. Multifunctional enzyme that converts the viral RNA genome into dsDNA in the cytoplasm, shortly after virus entry into the cell. This enzyme displays a DNA polymerase activity that can copy either DNA or RNA templates, and a ribonuclease H (RNase H) activity that cleaves the RNA strand of RNA-DNA heteroduplexes in a partially processive 3' to 5' endonucleasic mode. Conversion of viral genomic RNA into dsDNA requires many steps. A tRNA(3)-Lys binds to the primer-binding site (PBS) situated at the 5'-end of the viral RNA. RT uses the 3' end of the tRNA primer to perform a short round of RNA-dependent minus-strand DNA synthesis. The reading proceeds through the U5 region and ends after the repeated (R) region which is present at both ends of viral RNA. The portion of the RNA-DNA heteroduplex is digested by the RNase H, resulting in a ssDNA product attached to the tRNA primer. This ssDNA/tRNA hybridizes with the identical R region situated at the 3' end of viral RNA. This template exchange, known as minus-strand DNA strong stop transfer, can be either intra- or intermolecular. RT uses the 3' end of this newly synthesized short ssDNA to perform the RNA-dependent minus-strand DNA synthesis of the whole template. RNase H digests the RNA template except for two polypurine tracts (PPTs) situated at the 5'-end and near the center of the genome. It is not clear if both polymerase and RNase H activities are simultaneous. RNase H probably can proceed both in a polymerase-dependent (RNA cut into small fragments by the same RT performing DNA synthesis) and a polymerase-independent mode (cleavage of remaining RNA fragments by free RTs). Secondly, RT performs DNA-directed plus-strand DNA synthesis using the PPTs that have not been removed by RNase H as primers. PPTs and tRNA primers are then removed by RNase H. The 3' and 5' ssDNA PBS regions hybridize to form a circular dsDNA intermediate. Strand displacement synthesis by RT to the PBS and PPT ends produces a blunt ended, linear dsDNA copy of the viral genome that includes long terminal repeats (LTRs) at both ends. In terms of biological role, catalyzes viral DNA integration into the host chromosome, by performing a series of DNA cutting and joining reactions. This enzyme activity takes place after virion entry into a cell and reverse transcription of the RNA genome in dsDNA. The first step in the integration process is 3' processing. This step requires a complex comprising the viral genome, matrix protein, Vpr and integrase. This complex is called the pre-integration complex (PIC). The integrase protein removes 2 nucleotides from each 3' end of the viral DNA, leaving recessed CA OH's at the 3' ends. In the second step, the PIC enters cell nucleus. This process is mediated through integrase and Vpr proteins, and allows the virus to infect a non dividing cell. This ability to enter the nucleus is specific of lentiviruses, other retroviruses cannot and rely on cell division to access cell chromosomes. In the third step, termed strand transfer, the integrase protein joins the previously processed 3' ends to the 5' ends of strands of target cellular DNA at the site of integration. The 5'-ends are produced by integrase-catalyzed staggered cuts, 5 bp apart. A Y-shaped, gapped, recombination intermediate results, with the 5'-ends of the viral DNA strands and the 3' ends of target DNA strands remaining unjoined, flanking a gap of 5 bp. The last step is viral DNA integration into host chromosome. This involves host DNA repair synthesis in which the 5 bp gaps between the unjoined strands are filled in and then ligated. Since this process occurs at both cuts flanking the HIV genome, a 5 bp duplication of host DNA is produced at the ends of HIV-1 integration. Alternatively, Integrase may catalyze the excision of viral DNA just after strand transfer, this is termed disintegration. The chain is Gag-Pol polyprotein (gag-pol) from Homo sapiens (Human).